The primary structure comprises 389 residues: Choline/ethanolaminephosphotransferase 2 (389 aa).

Helical transmembrane passes span 49 to 69 (MITL…YIYS), 141 to 161 (TFWF…EHYF), 176 to 196 (GLAL…EWWA), 220 to 240 (IILF…NTSN), 252 to 272 (MLLA…VLIW), 286 to 306 (HLVV…MILA), 321 to 338 (MSLL…TARL), and 350 to 370 (VLLG…TSVI).

Belongs to the CDP-alcohol phosphatidyltransferase class-I family. The cofactor is Mg(2+). Mn(2+) serves as cofactor.

It localises to the membrane. The enzyme catalyses CDP-ethanolamine + a 1,2-diacyl-sn-glycerol = a 1,2-diacyl-sn-glycero-3-phosphoethanolamine + CMP + H(+). It carries out the reaction CDP-choline + a 1,2-diacyl-sn-glycerol = a 1,2-diacyl-sn-glycero-3-phosphocholine + CMP + H(+). It functions in the pathway phospholipid metabolism; phosphatidylethanolamine biosynthesis; phosphatidylethanolamine from ethanolamine: step 3/3. Its pathway is phospholipid metabolism; phosphatidylcholine biosynthesis; phosphatidylcholine from phosphocholine: step 2/2. Functionally, catalyzes both phosphatidylcholine and phosphatidylethanolamine biosynthesis from CDP-choline and CDP-ethanolamine, respectively. Has a higher cholinephosphotransferase activity than ethanolaminephosphotransferase activity. This chain is Choline/ethanolaminephosphotransferase 2 (AAPT2), found in Arabidopsis thaliana (Mouse-ear cress).